A 589-amino-acid polypeptide reads, in one-letter code: MYRWLVRILGTIFRFCDRSVPPARALLKRRRSDSTLFSTVDTDEIPAKRPRLDCFIHQVKNSLYNAASLFGFPFQLTTKPMVTSACNGTRNVAPSGEVFSNSSSCELTGSGSWNNMLKLGNKSPNGISDYPKIRVTVTRDQPRRVLPSFGFTLNSEGCNRRPGGRRHSKGNPESSLMWKPQEQAVTEMISEESGKGLRRPHCTVEEGVQKEEREKYRKLLERLKESGHGNSVCPVTSNYHSSQRSQMDTLKTKGWGEEQNHGVKTTQFVPKQYRLVETRGPLCSLRSEKRCSKGKITDTETMVGIRFENESRRGYQLEPDLSEEVSARLRLGSGSNGLLRRKVSIIETKEKNCSGKERDRRTDDLLELTEDMEKEISNALGHGPQDEILSSAFKLRITRGDIQTLKNYHWLNDEVINFYMNLLVERNKKQGYPALHVFSTFFYPKLKSGGYQAVKRWTKGVNLFEQEIILVPIHRKVHWSLVVIDLRKKCLKYLDSMGQKGHRICEILLQYLQDESKTKRNSDLNLLEWTHHSMKPHEIPQQLNGSDCGMFTCKYADYISRDKPITFTQHQMPLFRKKMVWEILHQQLL.

Residues 28-31 (KRRR) carry the Nuclear localization signal motif. Phosphoserine is present on Ser-32. A Nuclear localization signal motif is present at residues 46 to 51 (PAKRPR). Residues 155–176 (SEGCNRRPGGRRHSKGNPESSL) form a disordered region. The Nuclear export signal motif lies at 317-332 (LEPDLSEEVSARLRLG). 2 positions are modified to phosphoserine: Ser-333 and Ser-344. Residues 396–560 (RITRGDIQTL…FTCKYADYIS (165 aa)) form a protease region. Active-site residues include His-478 and Asp-495. The active-site Nucleophile is the Cys-548.

This sequence belongs to the peptidase C48 family. In terms of assembly, binds to SUMO2 and SUMO3. Interacts with the C-terminal domain of NUP153 via its N-terminus. Interacts with MTA1. Polyubiquitinated; which leads to proteasomal degradation.

It is found in the nucleus. The protein resides in the nuclear pore complex. It localises to the nucleus membrane. Its subcellular location is the cytoplasm. In terms of biological role, protease that catalyzes two essential functions in the SUMO pathway. The first is the hydrolysis of an alpha-linked peptide bond at the C-terminal end of the small ubiquitin-like modifier (SUMO) propeptides, SUMO1, SUMO2 and SUMO3 leading to the mature form of the proteins. The second is the deconjugation of SUMO1, SUMO2 and SUMO3 from targeted proteins, by cleaving an epsilon-linked peptide bond between the C-terminal glycine of the mature SUMO and the lysine epsilon-amino group of the target protein. May down-regulate CTNNB1 levels and thereby modulate the Wnt pathway. Deconjugates SUMO2 from MTA1. Plays a dynamic role in adipogenesis by desumoylating and promoting the stabilization of CEBPB. Acts as a regulator of the cGAS-STING pathway by catalyzing desumoylation of CGAS and STING1 during the late phase of viral infection. The polypeptide is Sentrin-specific protease 2 (Homo sapiens (Human)).